The chain runs to 302 residues: Beta-lactamase (302 aa).

The span at Met-1–Ala-11 shows a compositional bias: basic residues. An N-terminal signal peptide occupies residues Met-1–Ala-29. Residues Met-1–Pro-43 form a disordered region. The segment covering Ser-26–Pro-36 has biased composition (low complexity). Ser-85 acts as the Acyl-ester intermediate in catalysis. Ser-143 contacts substrate. The active-site Proton acceptor is Glu-179. Lys-247 to Gly-249 is a substrate binding site.

The protein belongs to the class-A beta-lactamase family.

It is found in the secreted. It carries out the reaction a beta-lactam + H2O = a substituted beta-amino acid. Active on penicillins but not on cephalosporins. This chain is Beta-lactamase (bla), found in Amycolatopsis lactamdurans (Nocardia lactamdurans).